The sequence spans 117 residues: MPAKKRKTTRQRRRSKARSASANTAALRKVSKERDQARRKLRAAQKKLAKAKKDASRKLAKLRKEAARKVAAAKKTRAPSKKGRKKATRKKGGGRSRKTARKVSTMKRGRGRPRKKA.

Basic residues-rich tracts occupy residues 1-17 and 39-50; these read MPAK…RSKA and RKLRAAQKKLAK. The segment at 1-117 is disordered; the sequence is MPAKKRKTTR…RGRGRPRKKA (117 aa). Residues 51–68 are compositionally biased toward basic and acidic residues; it reads AKKDASRKLAKLRKEAAR. A compositionally biased stretch (basic residues) spans 71–117; the sequence is AAAKKTRAPSKKGRKKATRKKGGGRSRKTARKVSTMKRGRGRPRKKA.

Functionally, binds DNA in vitro. This is Histone-like protein Hq1 (hcbA) from Coxiella burnetii (strain RSA 493 / Nine Mile phase I).